Reading from the N-terminus, the 128-residue chain is Holin-like protein CidA (128 aa).

Helical transmembrane passes span 4 to 24 (LLLTVIQIALLFIFARLINWV), 26 to 46 (ALLHINIPGSIIGIVILFTLL), 59 to 79 (GAAWLLGELLLFFIPSAVGVI), and 88 to 108 (FGVSILLVVIISTFVVMVSTG).

It belongs to the CidA/LrgA family. CidA subfamily.

It localises to the cell membrane. Its function is as follows. Increases the activity of extracellular murein hydrolases possibly by mediating their export via hole formation. Inhibited by the antiholin-like proteins LrgAB. In an unstressed cell, the LrgAB products probably inhibit the function of the CidA protein. When a cell is stressed by the addition of antibiotics or by other factors in the environment, CidA possibly oligomerizes within the bacterial cell membrane, creating lesions that disrupt the proton motive force, which in turn results in loss of cell viability. These lesions are also hypothesized to regulate the subsequent cell lysis by either allowing the murein hydrolases access to the cell wall substrate and/or regulating their activity by a possible change in the cell wall pH that results from loss of membrane potential. The chain is Holin-like protein CidA from Bacillus subtilis (strain 168).